We begin with the raw amino-acid sequence, 349 residues long: MNTFDINTITRENVKSLKPYSSARDEFEDFDTAEMIFLDANENPFQNGVNRYPDPQQNSVKAILAKNNNTKQSQILLGNGSDEVLDLLFRAFCEPNKDNIISLPPTYGMYGVLANINAVENREILLTTDFQPQVEKILEAVDENTKIIFLCSPNNPTGNSFSDESVVKLLQNFKGLVVIDEAYIDFSEKESWLTEIDEYPNLVITQTLSKAYGLAGIRLGICYASEAVISVLNKIKPPYNVNELTQQRAKERLKDLDKIKQEIASIIEQREELLKVLLEVNFVEKVYPTEANFILAKVDDANKRYNQLIEKGIVIRNRTTQPLCENCLRFTIGTKEENAVVIKELKLLN.

An N6-(pyridoxal phosphate)lysine modification is found at Lys-210.

The protein belongs to the class-II pyridoxal-phosphate-dependent aminotransferase family. Histidinol-phosphate aminotransferase subfamily. In terms of assembly, homodimer. Pyridoxal 5'-phosphate serves as cofactor.

It carries out the reaction L-histidinol phosphate + 2-oxoglutarate = 3-(imidazol-4-yl)-2-oxopropyl phosphate + L-glutamate. It participates in amino-acid biosynthesis; L-histidine biosynthesis; L-histidine from 5-phospho-alpha-D-ribose 1-diphosphate: step 7/9. The chain is Histidinol-phosphate aminotransferase from Flavobacterium johnsoniae (strain ATCC 17061 / DSM 2064 / JCM 8514 / BCRC 14874 / CCUG 350202 / NBRC 14942 / NCIMB 11054 / UW101) (Cytophaga johnsonae).